Consider the following 258-residue polypeptide: Snake venom serine protease PTLE1 (258 aa).

The N-terminal stretch at M1–A18 is a signal peptide. Positions Q19–L24 are excised as a propeptide. The 225-residue stretch at V25 to A249 folds into the Peptidase S1 domain. 6 disulfides stabilise this stretch: C31–C163, C50–C66, C98–C256, C142–C210, C174–C189, and C200–C225. N44 carries an N-linked (GlcNAc...) asparagine glycan. H65 (charge relay system) is an active-site residue. N-linked (GlcNAc...) asparagine glycosylation is found at N79 and N103. The Charge relay system role is filled by D110. N121 is a glycosylation site (N-linked (GlcNAc...) asparagine). Residue S204 is the Charge relay system of the active site.

Belongs to the peptidase S1 family. Snake venom subfamily. As to quaternary structure, monomer. Expressed by the venom gland.

It is found in the secreted. Snake venom serine protease that may act in the hemostasis system of the prey. In Gloydius halys (Chinese water mocassin), this protein is Snake venom serine protease PTLE1.